Consider the following 466-residue polypeptide: Ribulose bisphosphate carboxylase large chain (466 aa).

The residue at position 5 (Lys5) is an N6,N6,N6-trimethyllysine. Substrate-binding residues include Asn114 and Thr164. Lys166 acts as the Proton acceptor in catalysis. Lys168 is a binding site for substrate. Positions 192, 194, and 195 each coordinate Mg(2+). Lys192 is modified (N6-carboxylysine). The active-site Proton acceptor is the His285. The substrate site is built by Arg286, His318, and Ser370.

Belongs to the RuBisCO large chain family. Type I subfamily. In terms of assembly, heterohexadecamer of 8 large chains and 8 small chains; disulfide-linked. The disulfide link is formed within the large subunit homodimers. The cofactor is Mg(2+). Post-translationally, the disulfide bond which can form in the large chain dimeric partners within the hexadecamer appears to be associated with oxidative stress and protein turnover.

The protein localises to the plastid. It is found in the chloroplast. It catalyses the reaction 2 (2R)-3-phosphoglycerate + 2 H(+) = D-ribulose 1,5-bisphosphate + CO2 + H2O. It carries out the reaction D-ribulose 1,5-bisphosphate + O2 = 2-phosphoglycolate + (2R)-3-phosphoglycerate + 2 H(+). In terms of biological role, ruBisCO catalyzes two reactions: the carboxylation of D-ribulose 1,5-bisphosphate, the primary event in carbon dioxide fixation, as well as the oxidative fragmentation of the pentose substrate in the photorespiration process. Both reactions occur simultaneously and in competition at the same active site. The chain is Ribulose bisphosphate carboxylase large chain from Drosera peltata (Pale sundew).